Consider the following 455-residue polypeptide: Glutamyl-tRNA reductase (455 aa).

Substrate-binding positions include 49 to 52, Ser109, 114 to 116, and Gln120; these read TCNR and EAQ. The active-site Nucleophile is the Cys50. 190–195 provides a ligand contact to NADP(+); sequence GAGAMG.

The protein belongs to the glutamyl-tRNA reductase family. Homodimer.

It carries out the reaction (S)-4-amino-5-oxopentanoate + tRNA(Glu) + NADP(+) = L-glutamyl-tRNA(Glu) + NADPH + H(+). It participates in porphyrin-containing compound metabolism; protoporphyrin-IX biosynthesis; 5-aminolevulinate from L-glutamyl-tRNA(Glu): step 1/2. Catalyzes the NADPH-dependent reduction of glutamyl-tRNA(Glu) to glutamate 1-semialdehyde (GSA). The chain is Glutamyl-tRNA reductase from Salinispora tropica (strain ATCC BAA-916 / DSM 44818 / JCM 13857 / NBRC 105044 / CNB-440).